The sequence spans 241 residues: Alpha/beta-tubulin-N-acetyltransferase 9 (241 aa).

Positions Glu34–Pro181 constitute an N-acetyltransferase domain.

The protein belongs to the acetyltransferase family. GNAT subfamily.

It catalyses the reaction N-terminal L-methionyl-[tubulin] + acetyl-CoA = N-terminal N(alpha)-acetyl-L-methionyl-[tubulin] + CoA + H(+). Its function is as follows. N-acetyltransferase that mediates the acetylation of the N-terminal residues of alpha- and beta-tubulin. This is Alpha/beta-tubulin-N-acetyltransferase 9 (Nat9) from Mus musculus (Mouse).